The chain runs to 455 residues: Tubulin delta chain (455 aa).

143–149 provides a ligand contact to GTP; the sequence is AGGTGSG.

This sequence belongs to the tubulin family. In terms of assembly, found in a complex with TEDC1, TEDC2, TUBE1 and TUBD1. Highly expressed in testis.

The protein localises to the cell projection. It is found in the cilium. It localises to the cytoplasm. Its subcellular location is the cytoskeleton. The protein resides in the microtubule organizing center. The protein localises to the centrosome. It is found in the centriole. It localises to the nucleus. In terms of biological role, acts as a positive regulator of hedgehog signaling and regulates ciliary function. The chain is Tubulin delta chain (Tubd1) from Mus musculus (Mouse).